We begin with the raw amino-acid sequence, 542 residues long: Chaperonin GroEL 3 (542 aa).

ATP is bound by residues 30 to 33 (TLGP), Lys51, 87 to 91 (DGTTT), Gly415, and Asp496.

The protein belongs to the chaperonin (HSP60) family. As to quaternary structure, forms a cylinder of 14 subunits composed of two heptameric rings stacked back-to-back. Interacts with the co-chaperonin GroES.

The protein localises to the cytoplasm. The catalysed reaction is ATP + H2O + a folded polypeptide = ADP + phosphate + an unfolded polypeptide.. Together with its co-chaperonin GroES, plays an essential role in assisting protein folding. The GroEL-GroES system forms a nano-cage that allows encapsulation of the non-native substrate proteins and provides a physical environment optimized to promote and accelerate protein folding. This is Chaperonin GroEL 3 from Sinorhizobium medicae (strain WSM419) (Ensifer medicae).